The chain runs to 213 residues: Nicolin-1 (213 aa).

Part of the neuronal tubulin polyglutamylase complex which contains TPGS1, TPGS2, TTLL1, LRRC49 and NICN1. High expression level is found in brain, testis, liver and kidney. Weak expression in spleen, leukocytes, small intestin and colon.

Its subcellular location is the nucleus. This Mus musculus (Mouse) protein is Nicolin-1 (Nicn1).